The sequence spans 381 residues: Chymosin (381 aa).

The first 16 residues, 1 to 16 (MRCLVVLLAVFALSQG), serve as a signal peptide directing secretion. Positions 17–58 (AEITRIPLYKGKSLRKALKEHGLLEDFLQKQQYGISSKYSGF) are cleaved as a propeptide — activation peptide. Residues 74–378 (YFGKIYLGTP…DRANNLVGLA (305 aa)) form the Peptidase A1 domain. Residue Asp92 is part of the active site. Intrachain disulfides connect Cys105-Cys110 and Cys265-Cys269. Asp274 is an active-site residue. Cys308 and Cys341 are oxidised to a cystine.

This sequence belongs to the peptidase A1 family. In terms of assembly, monomer.

The catalysed reaction is Broad specificity similar to that of pepsin A. Clots milk by cleavage of a single 104-Ser-Phe-|-Met-Ala-107 bond in kappa-chain of casein.. Its function is as follows. Chymosin is synthesized in the mucosa of the abomasum (fourth stomach) of young (unweaned) ruminants. The enzyme hydrolyzes casein to paracasein. The polypeptide is Chymosin (CYM) (Bos taurus (Bovine)).